Consider the following 256-residue polypeptide: MRLFLALLALGFAAVAAVPANPQRIVGGSTTTIQQYPTIVALLFSRNGNTFFQACGGTILNNRNVLTAAHCPHGDAVNRWRVRSGSTFANSGGAVHNLNSVRIHPNYNRRNLDNDIAIMRTASNIAFNNAAQPARIAGANYNLGDNQVVWAAGWGAIRSGGPSSEQLRHVQVWTVNQATCRSRYASIGRTVTDNMLCSGWLDVGGRDQCQGDSGGPLYHNGVVVGVCSWGEECALARFPGVNARVTRYTSWISNNS.

An N-terminal signal peptide occupies residues 1-17; sequence MRLFLALLALGFAAVAA. Residues 18 to 24 constitute a propeptide, activation peptide; the sequence is VPANPQR. The region spanning 25 to 256 is the Peptidase S1 domain; sequence IVGGSTTTIQ…RYTSWISNNS (232 aa). A disulfide bridge connects residues C55 and C71. Residues H70 and D115 each act as charge relay system in the active site. 2 disulfides stabilise this stretch: C180/C197 and C209/C233. S213 functions as the Charge relay system in the catalytic mechanism.

It belongs to the peptidase S1 family. In terms of tissue distribution, midgut.

It is found in the secreted. It localises to the extracellular space. The enzyme catalyses Preferential cleavage: Arg-|-Xaa, Lys-|-Xaa.. The sequence is that of Trypsin, alkaline C from Manduca sexta (Tobacco hawkmoth).